We begin with the raw amino-acid sequence, 70 residues long: Pyruvate-flavodoxin oxidoreductase (70 aa).

It belongs to the pyruvate:ferredoxin/flavodoxin oxidoreductase family.

The catalysed reaction is oxidized [flavodoxin] + pyruvate + CoA + 2 H(+) = reduced [flavodoxin] + acetyl-CoA + CO2. Its function is as follows. Oxidoreductase required for the transfer of electrons from pyruvate to flavodoxin, which reduces nitrogenase. The polypeptide is Pyruvate-flavodoxin oxidoreductase (nifJ) (Anabaena variabilis).